The chain runs to 481 residues: Serine/threonine-protein kinase US3 (481 aa).

Residues 12–63 (GQGRRKEEAVPPETKPSRVFPHGPFYTPAEDACLDSPPPETPKPSHTTPPSE) are disordered. The Protein kinase domain occupies 191 to 478 (FTIHGALTPG…AAELLCLPLF (288 aa)). ATP contacts are provided by residues 197 to 205 (LTPGSEGCV) and Lys-220. Catalysis depends on Asp-305, which acts as the Proton acceptor.

The protein belongs to the protein kinase superfamily. Ser/Thr protein kinase family. As to quaternary structure, interacts with host LAT; this interaction prevents LAT activation of TRAF6. Phosphorylated by UL13; this phosphorylation regulates subsequent phosphorylation of UL31 and UL34 by US3. Autophosphorylated.

It is found in the host cytoplasm. The protein resides in the host nucleus. It carries out the reaction L-seryl-[protein] + ATP = O-phospho-L-seryl-[protein] + ADP + H(+). The enzyme catalyses L-threonyl-[protein] + ATP = O-phospho-L-threonyl-[protein] + ADP + H(+). In terms of biological role, multifunctional serine/threonine kinase that plays a role in several processes including egress of virus particles from the nucleus, modulation of the actin cytoskeleton and inhibition of host immune response. Phosphorylates UL31 and UL34, two critical regulators of capsid budding from nucleus to endoplasmic reticulum, thereby facilitating virion egress. Modulates and redistributes host components of the nuclear envelope, including LMNA, emerin/EMD and the nuclear matrix protein MATR3. In turn, facilitates nuclear pore impairment and capsid release through impaired nuclear envelope. Phosphorylates envelope glycoprotein B (gB), probably to direct it to the cell surface. Promotes virus intracellular spread by restructuring host cell cytoskeleton. Blocks host apoptosis to extend cell survival and allow efficient viral replication. Promotes viral gene expression by phosphorylating host HDAC2 to reduce viral genome silencing. Strongly inhibits TCR-activated signal transduction in T-cells by reducing the ubiquitination of LAT and TRAF6, leading to a suboptimal activation of LAT. Subverts host antiviral innate immunity by inhibiting type I interferon production through hyperphosphorylation of beta-catenin/CTNNB1. In addition, phosphorylates the RNA sensor RIGI and the transcription factor IRF3 to prevent the RLR-mediated antiviral signaling pathway. Hyperphosphorylates host RELA and thereby dampens NF-kappa-B signaling. Acts as an immunoevasin partly responsible for inhibition of MR1 expression and antigen presentation in response to bacterial infection. The protein is Serine/threonine-protein kinase US3 (US3) of Human herpesvirus 1 (strain 17) (HHV-1).